The following is a 168-amino-acid chain: ATP synthase subunit b (168 aa).

A helical transmembrane segment spans residues 9–29; it reads SIPFGTIAYTLFIFLLLLVML.

Belongs to the ATPase B chain family. In terms of assembly, F-type ATPases have 2 components, F(1) - the catalytic core - and F(0) - the membrane proton channel. F(1) has five subunits: alpha(3), beta(3), gamma(1), delta(1), epsilon(1). F(0) has three main subunits: a(1), b(2) and c(10-14). The alpha and beta chains form an alternating ring which encloses part of the gamma chain. F(1) is attached to F(0) by a central stalk formed by the gamma and epsilon chains, while a peripheral stalk is formed by the delta and b chains.

It is found in the cell membrane. Functionally, f(1)F(0) ATP synthase produces ATP from ADP in the presence of a proton or sodium gradient. F-type ATPases consist of two structural domains, F(1) containing the extramembraneous catalytic core and F(0) containing the membrane proton channel, linked together by a central stalk and a peripheral stalk. During catalysis, ATP synthesis in the catalytic domain of F(1) is coupled via a rotary mechanism of the central stalk subunits to proton translocation. Its function is as follows. Component of the F(0) channel, it forms part of the peripheral stalk, linking F(1) to F(0). The polypeptide is ATP synthase subunit b (Bacillus cereus (strain B4264)).